The primary structure comprises 307 residues: Malonyl-[acyl-carrier protein] O-methyltransferase (307 aa).

It belongs to the methyltransferase superfamily.

It catalyses the reaction malonyl-[ACP] + S-adenosyl-L-methionine = malonyl-[ACP] methyl ester + S-adenosyl-L-homocysteine. It functions in the pathway cofactor biosynthesis; biotin biosynthesis. In terms of biological role, converts the free carboxyl group of a malonyl-thioester to its methyl ester by transfer of a methyl group from S-adenosyl-L-methionine (SAM). It allows to synthesize pimeloyl-ACP via the fatty acid synthetic pathway. This Nitrosospira multiformis (strain ATCC 25196 / NCIMB 11849 / C 71) protein is Malonyl-[acyl-carrier protein] O-methyltransferase.